A 542-amino-acid chain; its full sequence is Major facilitator superfamily transporter mfsA (542 aa).

The next 11 helical transmembrane spans lie at 19 to 39, 70 to 90, 99 to 119, 127 to 149, 160 to 180, 194 to 214, 321 to 341, 349 to 369, 380 to 400, 413 to 432, and 444 to 464; these read FAAV…AGLL, GAVT…SMFC, LIFM…VCYT, FVIG…PVWQ, FLVC…YWVV, FPVA…LMLP, IMGG…FFMI, LYLI…ACLI, AVGI…LPWI, VGAS…VVMF, and VYLF…FFYV.

Belongs to the major facilitator superfamily. Sugar transporter (TC 2.A.1.1) family.

Its subcellular location is the membrane. Functionally, major facilitator superfamily transporter that may be involved in A.fumigatus adaptation to azoles such as vorizonazole. The polypeptide is Major facilitator superfamily transporter mfsA (Aspergillus fumigatus (strain ATCC MYA-4609 / CBS 101355 / FGSC A1100 / Af293) (Neosartorya fumigata)).